The sequence spans 71 residues: Small ribosomal subunit protein bS21 (71 aa).

The protein belongs to the bacterial ribosomal protein bS21 family.

This is Small ribosomal subunit protein bS21 from Shewanella sp. (strain MR-4).